The primary structure comprises 1944 residues: MSNFSEERATMIAAGDLQEFVPFGRDHCKHHPNALNLQLRQLQPASELWSSDGAAGLVGSLQEVTIHEKQKESWQLRKGVSEIGDAADYDEELYVAGNMVIWSKGSKSQALAVYKAFTVDSTVQQALWCDFIISQDKSEKIYKSHELEKCICILQSSCMNMHSIDGKDYIASLPFQVANVWATKYGLLFERCSSSHEVPPSLPREPLPTMFSMLHPLDEITPLVCKSGSLFGSSRVQYVVDPAVKIVFLNIDPSIVMTYDAVQNVHSVWTLRRVKPEEENAVLKFPEQAGTLQNATTSSSLTAHLRSLSKGESPVASPFQNYSSIHSQSRSTSSPSLHSRSPSISNMAALSRAHSPALGVHSFSGAQRFNLSSHSQSPKRHSISHSPSGSFNDSFLAPETEPIVPELCIDHLWTETLPNIREKNSQASKVFITTDLCGQKFLCFLVEAQLQLRCVKFQESNDKTQLIFGSVTNIHAKDAAPVEKIHTMLVLEGNGNLVLYTGVVRVGKVFIPGLPAPSLTMSNMMPRPSTPLDGVGTPKPLSKLLGSMDEVVLLSPVPELRDSSKLNDSLYNEDCTFQQLGTYIHSVRDPVHNRVTLELSNGSMVRITIPEVATSELVQTCLQAIKFILPKEVAIQVLVKWYNVHSAPGGPSCHSEWSLFVICLLNMMGYNTDRLAWTRSFDFEGSLSPVIAPKKARPSDTGSDEDWEYLLNSEYHRNVESHLLNKSLCLTALEVSNAKDEDFSQNLSLDSSTLLFAHIPAIFFVLHLVYEELKLNTLMGEGICSLIDLLVQLARDLKLDSYLDHYYRDSPTLVKTTGQVCTIDQGQMGFMHHPPFFTSEPPSIYQWVSSCLKGEGMPPYPYLPGICERSRLVVLSIALYTLGDESCVSDETCQYLSKVTSTPQKPQAEQEENRFTFRHSASVSVLAERLVVWMASVGFTLRDLETLPFGIALPIRDAIYHCREQPDSDWSEAVCLLIGRQDLSKQACEGNLPRGKSVLSSEVSSGTEAEEEDDGMNDLNHEVMSLIWSEDLRVQDVRRLLQSAQPVRVNVVQYPELSDHEFIEEKENRLLQLCQRTMALPVGRGMFTLFSYHPVPTEPLPVPKLNLTGRAPPRNTTVDLNSGNIDVPPNMASWASFHNGVAAGLKIAPASQIDSAWIVYNKPKHAELANEYAGFLMALGLNGHLTKLATLNIHDYLTKGHEMTSIGLLLGVSAAKLGTMDMSITRLLSIHVPALLPPTSTELDVPHNVQVAAVVGIGLVYQGTAHRHTAEVLLAEIGRPPGPEMEYCTDRESYSLAAGLALGMVCLGHGSNLIGMSDLNVPEQLYQYMVGGHRRFQTGMHREKHKSPSYQIKEGDTINVDVTCPGATLALAMIYLKTNNRSIADWLRAPDTMYLLDFVKPEFLLLRTLARCLILWDDILPNSKWVDSNVPQIIRENSISLSEIELPCSEDLNLETLSQAHVYIIAGACLSLGFRFAGSENLSAFSCLHKFAKDFMNYLSAPNASVTGPYNLETCLSVVLLSLAMVMAGSGNLKVLQLCRFLHMKTGGEMNYGFHLAHHMALGLLFLGGGRYSLSTSNSSIAALLCALYPHFPAHSTDNRYHLQALRHLYVLAAEPRLLVPVDVDTNTPCYALIEVTYKGTQWYEQTKEELMAPTLLPELHLLKQMKVKGPRYWELLIDLSKGEQHLRSILSKDGVLYVKLRAGQLSYKEDPMGWQSLLAQTVANRNSEARAFKPETISSFTSDPALLSFAEYFCKPTVSMGPKQEILDLFSSILYECVAQETPEMLPAYIAMDQALRSLKKRDMSDTSDLWQIKLILEFFSSRSHQDRQHTYPKRGLFINSEFLPVVKCTVDATLDQWLQAGGDVCVHAYLSGQPVEKSQLNMLACFLVYHSVPAPRHLPPMGLEGSTSFAELLYRFRHLKMPVRALLRLAPVLLGNPQPMVM.

Serine 51 and serine 60 each carry phosphoserine. A Phosphothreonine modification is found at threonine 291. Residues 312-343 (ESPVASPFQNYSSIHSQSRSTSSPSLHSRSPS) are disordered. Serine 313, serine 341, serine 343, serine 355, serine 362, serine 373, and serine 377 each carry phosphoserine. Residues 323 to 343 (SSIHSQSRSTSSPSLHSRSPS) are compositionally biased toward low complexity. The tract at residues 370 to 395 (NLSSHSQSPKRHSISHSPSGSFNDSF) is disordered. The span at 384-393 (SHSPSGSFND) shows a compositional bias: polar residues. At threonine 537 the chain carries Phosphothreonine. Residues serine 547 and serine 555 each carry the phosphoserine modification. Phosphotyrosine is present on tyrosine 571. Phosphoserine occurs at positions 680, 686, and 688. Residues 991–1014 (NLPRGKSVLSSEVSSGTEAEEEDD) form a disordered region. Residues 998 to 1007 (VLSSEVSSGT) show a composition bias toward polar residues. PC repeat units lie at residues 1297–1325 (AAGL…PEQL), 1366–1404 (GATL…PEFL), 1467–1501 (GACL…YLSA), and 1520–1552 (LLSL…EMNY).

This sequence belongs to the APC1 family. The mammalian APC/C is composed at least of 14 distinct subunits ANAPC1, ANAPC2, CDC27/APC3, ANAPC4, ANAPC5, CDC16/APC6, ANAPC7, CDC23/APC8, ANAPC10, ANAPC11, CDC26/APC12, ANAPC13, ANAPC15 and ANAPC16 that assemble into a complex of at least 19 chains with a combined molecular mass of around 1.2 MDa; APC/C interacts with FZR1 and FBXO5. Phosphorylated. Phosphorylation on Ser-355 occurs specifically during mitosis. As to expression, abundantly expressed in proliferating fibroblasts, juvenile testis, adult brain and epididymis.

Its pathway is protein modification; protein ubiquitination. Component of the anaphase promoting complex/cyclosome (APC/C), a cell cycle-regulated E3 ubiquitin ligase that controls progression through mitosis and the G1 phase of the cell cycle. The APC/C complex acts by mediating ubiquitination and subsequent degradation of target proteins: it mainly mediates the formation of 'Lys-11'-linked polyubiquitin chains and, to a lower extent, the formation of 'Lys-48'- and 'Lys-63'-linked polyubiquitin chains. The APC/C complex catalyzes assembly of branched 'Lys-11'-/'Lys-48'-linked branched ubiquitin chains on target proteins. The polypeptide is Anaphase-promoting complex subunit 1 (Anapc1) (Mus musculus (Mouse)).